The chain runs to 799 residues: Rho GTPase-activating protein gacI (799 aa).

The 226-residue stretch at 226-451 folds into the Rho-GAP domain; sequence IKLEEVFARE…LLVEHVLTIF (226 aa). A compositionally biased stretch (polar residues) spans 472–520; the sequence is RSQSDISSQTKPLPSLPTSPQNRSAIITGDSSSPSLNTPPVKSSLNSSD. Disordered regions lie at residues 472-572 and 741-799; these read RSQS…PTSN and EKQQ…LSNQ. Positions 525 to 549 are enriched in low complexity; it reads DNGSNNNNNNNTTNTITNNGIADTA. Residues 550-568 are compositionally biased toward pro residues; the sequence is TPPPPTTPTAPTTPPPPTT. Low complexity-rich tracts occupy residues 743–752 and 759–791; these read QQQQQQQQTN and ISSNTNTSISGDNSENGDSLNSSTSNQSPLNSS.

It localises to the cytoplasm. Rho GTPase-activating protein involved in the signal transduction pathway. This is Rho GTPase-activating protein gacI (gacI) from Dictyostelium discoideum (Social amoeba).